We begin with the raw amino-acid sequence, 373 residues long: Centrosomal protein of 41 kDa (373 aa).

The disordered stretch occupies residues 91–137; the sequence is LEDNDSATSEADAEIAAKTNGKGSPEEQSPSPVQFINSTGAGDSSRS. A phosphoserine mark is found at S96 and S99. The residue at position 109 (T109) is a Phosphothreonine. Phosphoserine is present on residues S114 and S121. Residues 116-137 show a composition bias toward polar residues; the sequence is EEQSPSPVQFINSTGAGDSSRS. Positions 169 to 266 constitute a Rhodanese domain; the sequence is PDCPFLLLDV…LAQKFPEGLV (98 aa). The segment at 317-373 is disordered; it reads DQGPADNPSRLNQNNSAGKDSKVAACRGGQNLPTSCPASHSSPRTLTSGHLQGKPWK. Polar residues predominate over residues 325–334; sequence SRLNQNNSAG. An Omega-N-methylarginine modification is found at R343. Over residues 347–366 the composition is skewed to polar residues; sequence NLPTSCPASHSSPRTLTSGH.

Belongs to the CEP41 family. As to quaternary structure, found in a complex with TTLL6.

It localises to the cytoplasm. It is found in the cytoskeleton. Its subcellular location is the microtubule organizing center. The protein localises to the centrosome. The protein resides in the cell projection. It localises to the cilium. It is found in the cilium basal body. Its function is as follows. Required during ciliogenesis for tubulin glutamylation in cilium. Probably acts by participating in the transport of TTLL6, a tubulin polyglutamylase, between the basal body and the cilium. This Mus musculus (Mouse) protein is Centrosomal protein of 41 kDa (Cep41).